The chain runs to 328 residues: Lactamase-like protein nscB (328 aa).

Zn(2+) contacts are provided by His97, His99, Asp101, and His102. The active-site Proton donor/acceptor is the Asp101.

It belongs to the metallo-beta-lactamase superfamily. Requires Zn(2+) as cofactor.

It functions in the pathway secondary metabolite biosynthesis. Lactamase-like protein; part of the gene cluster that mediates the biosynthesis of neosartoricin, a prenylated anthracenone that exhibits T-cell antiproliferative activity, suggestive of a physiological role as an immunosuppressive agent. The non-reducing polyketide synthase nscA probably synthesizes and cyclizes the decaketide backbone. The hydrolase nscB then mediates the product release through hydrolysis followed by spontaneous decarboxylation. The prenyltransferase nscD catalyzes the addition of the dimethylallyl group to the aromatic C5. The FAD-dependent monooxygenase nscC is then responsible for the stereospecific hydroxylation at C2. There is no gene encoding O-acetyltransferase in the nsc gene cluster; thus, the last step of 2-O-acetylation leading to neosartoricin may be catalyzed by an unidentified O-acetyltransferase. The protein is Lactamase-like protein nscB of Neosartorya fischeri (strain ATCC 1020 / DSM 3700 / CBS 544.65 / FGSC A1164 / JCM 1740 / NRRL 181 / WB 181) (Aspergillus fischerianus).